A 594-amino-acid chain; its full sequence is Chondroitin sulfate proteoglycan 5 (594 aa).

Over residues 1 to 12 (MGVGGTSASDTA) the composition is skewed to polar residues. Residues 1 to 18 (MGVGGTSASDTALSLCPT) form the signal peptide. Disordered stretches follow at residues 1-325 (MGVG…PWGL) and 343-418 (TTSF…SECR). Residues 19–481 (APEWPPRNGS…AIVTDFQVLC (463 aa)) are Extracellular-facing. Asn26 and Asn44 each carry an N-linked (GlcNAc...) asparagine glycan. Positions 140-181 (SPGLGLSSPGPNLGLPSLDLPNPNLGLPDPNLGLPNPSLGLP) are enriched in low complexity. Pro residues-rich tracts occupy residues 182–195 (SPGP…PNPN) and 219–229 (IPLPSPSPGPG). A compositionally biased stretch (low complexity) spans 248-259 (PQPSSSPAPAQR). Over residues 298-310 (GGHGPGGGHGAGG) the composition is skewed to gly residues. An interaction with TNC and TNR region spans residues 338 to 377 (ADFYPTTSFYAEGDDDAEEELEEDEEEEEEEDGGLEDENG). The segment covering 349–375 (EGDDDAEEELEEDEEEEEEEDGGLEDE) has biased composition (acidic residues). Asn413 and Asn425 each carry an N-linked (GlcNAc...) asparagine glycan. Positions 429-471 (RSVCDLVPSYCHNGGQCYLVESHGAFCRCNTQDYTWHKGTRCE) constitute an EGF-like domain. 3 disulfide bridges follow: Cys432/Cys445, Cys439/Cys455, and Cys457/Cys470. A helical membrane pass occupies residues 482-502 (VAVGSAALVLLLLFMLTVFFA). Over 503-594 (KKLYLLKTEN…GVPCLHNNLG (92 aa)) the chain is Cytoplasmic. A disordered region spans residues 535–594 (TIAEGSHPNDDPGAPHKLQDPLKPGLKDEEPLSILSTAPEEGSKGEPGGCGVPCLHNNLG). Residues 541 to 564 (HPNDDPGAPHKLQDPLKPGLKDEE) are compositionally biased toward basic and acidic residues.

In terms of assembly, binds TNC and TNR. The 80 kDa form but not the 140 kDa form can bind TNC and TNR when expressed at the cell surface. In terms of processing, different forms exist: the 140 kDa form (also reported as 130 kDa), which probably consists of the entire protein, and the 38 and 80 kDa forms, which are probably cleaved in their N-terminus. Increase in synaptic activity, results in shedding of the extracellular domain and expression at the cell surface of a 38 kDa form. A form of 200 kDa has also been reported, which is probably hyperglycosylated. Post-translationally, N-glycosylated. O-glycosylated; contains chondroitin sulfate glycans. Part-time proteoglycan, the 200 kDa form is the only one containing chondroitin sulfate glycans. In terms of tissue distribution, expressed in astroglial and neuronal surfaces in different parts of the embryonic brain. Expressed in adult brain and retina (at protein level).

It is found in the cell membrane. Functionally, may function as a growth and differentiation factor involved in neuritogenesis and more particularly in neurite extension. This Gallus gallus (Chicken) protein is Chondroitin sulfate proteoglycan 5 (CSPG5).